The sequence spans 396 residues: MTKPIRNVAVLGATGSIGAAALDVLARHPRQFHVSLLAAGQRVDALLALCHTYRPDHAVIGDATLYTTLRDGLNAAGLATKAYAGEAALAELVASTTCDTVVAAIVGAAGLHSTLAAARAGKRLLLANKESLVLAGMLLMREASISGAEIIPIDSEHNAIFQCLRSRTTDGVHRITLTASGGPFRGHNRTMLAKITPTQAMAHPTWSMGPKISVDSATLMNKGLEVIEAHHLFGLPSEQIDVLVHPQSLVHSLVEFIDGSTLAQLSLPDMRTTLAVGLSWPERIGSGVPGLDLMKHNRLDFERPDTETFSCLRLARDAMQTGGTAPAVLNAANEIAVSAFLQGRIGFLTIPALIEHALTTLPRYEADTLETLLTVDTETRRITHAALTHFPLPLPL.

NADPH contacts are provided by threonine 14, glycine 15, serine 16, isoleucine 17, glycine 40, and asparagine 128. Lysine 129 is a binding site for 1-deoxy-D-xylulose 5-phosphate. Glutamate 130 serves as a coordination point for NADPH. Position 154 (aspartate 154) interacts with Mn(2+). The 1-deoxy-D-xylulose 5-phosphate site is built by serine 155, glutamate 156, serine 180, and histidine 203. Residue glutamate 156 coordinates Mn(2+). An NADPH-binding site is contributed by glycine 209. Residues serine 216, asparagine 221, lysine 222, and glutamate 225 each coordinate 1-deoxy-D-xylulose 5-phosphate. A Mn(2+)-binding site is contributed by glutamate 225.

Belongs to the DXR family. Mg(2+) serves as cofactor. Requires Mn(2+) as cofactor.

It catalyses the reaction 2-C-methyl-D-erythritol 4-phosphate + NADP(+) = 1-deoxy-D-xylulose 5-phosphate + NADPH + H(+). The protein operates within isoprenoid biosynthesis; isopentenyl diphosphate biosynthesis via DXP pathway; isopentenyl diphosphate from 1-deoxy-D-xylulose 5-phosphate: step 1/6. In terms of biological role, catalyzes the NADPH-dependent rearrangement and reduction of 1-deoxy-D-xylulose-5-phosphate (DXP) to 2-C-methyl-D-erythritol 4-phosphate (MEP). In Xylella fastidiosa (strain 9a5c), this protein is 1-deoxy-D-xylulose 5-phosphate reductoisomerase.